Here is a 675-residue protein sequence, read N- to C-terminus: Putative exonuclease GOR (675 aa).

The segment covering 66–79 (VAKEAAPEASRHLG) has biased composition (basic and acidic residues). Disordered stretches follow at residues 66–90 (VAKEAAPEASRHLGAEQSPAGAPEG) and 225–263 (AKRTRVASSSQRSRGSKVGRQPGKTRNRSGMACKTTATT). The segment at 358–483 (MPGLSRAALY…VRDGRKESLD (126 aa)) is GOR1-125 epitope.

This sequence belongs to the REXO1/REXO3 family.

The protein localises to the cytoplasm. It localises to the nucleus. The protein is Putative exonuclease GOR (REXO1L1P) of Homo sapiens (Human).